The sequence spans 654 residues: Probable Xaa-Pro aminopeptidase P (654 aa).

4 residues coordinate Mn(2+): Asp449, Asp460, Glu558, and Glu572.

The protein belongs to the peptidase M24B family. Requires Mn(2+) as cofactor.

The catalysed reaction is Release of any N-terminal amino acid, including proline, that is linked to proline, even from a dipeptide or tripeptide.. In terms of biological role, catalyzes the removal of a penultimate prolyl residue from the N-termini of peptides. This chain is Probable Xaa-Pro aminopeptidase P (ampp), found in Aspergillus fumigatus (strain CBS 144.89 / FGSC A1163 / CEA10) (Neosartorya fumigata).